Reading from the N-terminus, the 553-residue chain is Hydroxylamine reductase (553 aa).

[2Fe-2S] cluster contacts are provided by C3, C6, C18, and C25. Hybrid [4Fe-2O-2S] cluster contacts are provided by H252, E276, C320, C408, C436, C461, E495, and K497. C408 is subject to Cysteine persulfide.

It belongs to the HCP family. [2Fe-2S] cluster serves as cofactor. Hybrid [4Fe-2O-2S] cluster is required as a cofactor.

It is found in the cytoplasm. It catalyses the reaction A + NH4(+) + H2O = hydroxylamine + AH2 + H(+). Functionally, catalyzes the reduction of hydroxylamine to form NH(3) and H(2)O. This is Hydroxylamine reductase from Aliivibrio fischeri (strain MJ11) (Vibrio fischeri).